The sequence spans 194 residues: uncharacterized protein (194 aa).

Positions 6 to 66 constitute an HTH tetR-type domain; the sequence is EFDTALVLHR…SAVKSYLEGK (61 aa). Positions 29-48 form a DNA-binding region, H-T-H motif; that stretch reads SLQDLLSHLGIARQSLYDTY.

This is an uncharacterized protein from Bacillus subtilis (strain 168).